Reading from the N-terminus, the 184-residue chain is Transcription termination/antitermination protein NusG (184 aa).

Belongs to the NusG family.

Its function is as follows. Participates in transcription elongation, termination and antitermination. This Borreliella burgdorferi (strain ATCC 35210 / DSM 4680 / CIP 102532 / B31) (Borrelia burgdorferi) protein is Transcription termination/antitermination protein NusG.